The sequence spans 126 residues: Histone H2B type 2-E (126 aa).

Over residues 1-12 (MPEPAKSAPAPK) the composition is skewed to low complexity. The segment at 1 to 32 (MPEPAKSAPAPKKGSKKAVTKAQKKDGKKRKR) is disordered. P2 is subject to N-acetylproline. E3 carries the post-translational modification ADP-ribosyl glutamic acid. K6 carries the post-translational modification N6-(2-hydroxyisobutyryl)lysine; alternate. K6 bears the N6-(beta-hydroxybutyryl)lysine; alternate mark. Residue K6 is modified to N6-acetyllysine; alternate. K6 is modified (N6-butyryllysine; alternate). K6 carries the post-translational modification N6-crotonyllysine; alternate. K6 carries the N6-lactoyllysine; alternate modification. K6 participates in a covalent cross-link: Glycyl lysine isopeptide (Lys-Gly) (interchain with G-Cter in SUMO2); alternate. S7 is modified (ADP-ribosylserine). K12 bears the N6-(beta-hydroxybutyryl)lysine; alternate mark. 2 positions are modified to N6-acetyllysine; alternate: K12 and K13. N6-crotonyllysine; alternate is present on residues K12 and K13. An N6-lactoyllysine; alternate modification is found at K12. At K13 the chain carries N6-(2-hydroxyisobutyryl)lysine; alternate. S15 is modified (phosphoserine; by STK4/MST1). N6-acetyllysine; alternate occurs at positions 16, 17, 21, and 24. 4 positions are modified to N6-crotonyllysine; alternate: K16, K17, K21, and K24. K16, K17, K21, and K24 each carry N6-lactoyllysine; alternate. K17 is subject to N6-glutaryllysine; alternate. 2 positions are modified to N6-(2-hydroxyisobutyryl)lysine; alternate: K21 and K24. K21 bears the N6-(beta-hydroxybutyryl)lysine; alternate mark. K21 is subject to N6-butyryllysine; alternate. A Glycyl lysine isopeptide (Lys-Gly) (interchain with G-Cter in SUMO2); alternate cross-link involves residue K21. Position 25 is an N6-(2-hydroxyisobutyryl)lysine (K25). K35 carries the N6-(2-hydroxyisobutyryl)lysine; alternate modification. K35 is subject to N6-(beta-hydroxybutyryl)lysine; alternate. An N6-crotonyllysine; alternate modification is found at K35. The residue at position 35 (K35) is an N6-glutaryllysine; alternate. At K35 the chain carries N6-succinyllysine; alternate. K35 participates in a covalent cross-link: Glycyl lysine isopeptide (Lys-Gly) (interchain with G-Cter in ubiquitin); alternate. Position 36 is a polyADP-ribosyl glutamic acid (E36). S37 carries the phosphoserine; by AMPK modification. Residues K44, K47, and K58 each carry the N6-(2-hydroxyisobutyryl)lysine; alternate modification. N6-lactoyllysine; alternate is present on K44. 2 positions are modified to N6-glutaryllysine; alternate: K44 and K47. N6-methyllysine; alternate is present on K47. An N6,N6-dimethyllysine; alternate modification is found at K58. At R80 the chain carries Dimethylated arginine. K86 bears the N6-(2-hydroxyisobutyryl)lysine; alternate mark. K86 carries the N6-acetyllysine; alternate modification. K86 bears the N6-lactoyllysine; alternate mark. K86 bears the N6,N6,N6-trimethyllysine; alternate mark. An omega-N-methylarginine mark is found at R87 and R93. Position 109 is an N6-(2-hydroxyisobutyryl)lysine; alternate (K109). K109 carries the N6-lactoyllysine; alternate modification. K109 carries the post-translational modification N6-glutaryllysine; alternate. An N6-methyllysine; alternate modification is found at K109. S113 carries O-linked (GlcNAc) serine glycosylation. Position 116 is a phosphothreonine (T116). Residues K117 and K121 each carry the N6-(2-hydroxyisobutyryl)lysine; alternate modification. At K117 the chain carries N6-(beta-hydroxybutyryl)lysine; alternate. N6-lactoyllysine; alternate is present on residues K117 and K121. N6-glutaryllysine; alternate occurs at positions 117 and 121. An N6-succinyllysine; alternate mark is found at K117 and K121. K117 is modified (N6-methylated lysine; alternate). Residue K121 forms a Glycyl lysine isopeptide (Lys-Gly) (interchain with G-Cter in ubiquitin); alternate linkage.

The protein belongs to the histone H2B family. As to quaternary structure, the nucleosome is a histone octamer containing two molecules each of H2A, H2B, H3 and H4 assembled in one H3-H4 heterotetramer and two H2A-H2B heterodimers. The octamer wraps approximately 147 bp of DNA. Post-translationally, monoubiquitination at Lys-35 (H2BK34Ub) by the MSL1/MSL2 dimer is required for histone H3 'Lys-4' (H3K4me) and 'Lys-79' (H3K79me) methylation and transcription activation at specific gene loci, such as HOXA9 and MEIS1 loci. Similarly, monoubiquitination at Lys-121 (H2BK120Ub) by the RNF20/40 complex gives a specific tag for epigenetic transcriptional activation and is also prerequisite for histone H3 'Lys-4' and 'Lys-79' methylation. It also functions cooperatively with the FACT dimer to stimulate elongation by RNA polymerase II. H2BK120Ub also acts as a regulator of mRNA splicing: deubiquitination by USP49 is required for efficient cotranscriptional splicing of a large set of exons. Phosphorylated on Ser-15 (H2BS14ph) by STK4/MST1 during apoptosis; which facilitates apoptotic chromatin condensation. Also phosphorylated on Ser-15 in response to DNA double strand breaks (DSBs), and in correlation with somatic hypermutation and immunoglobulin class-switch recombination. Phosphorylation at Ser-37 (H2BS36ph) by AMPK in response to stress promotes transcription. In terms of processing, ADP-ribosylated by PARP1 or PARP2 on Ser-7 (H2BS6ADPr) in response to DNA damage. H2BS6ADPr promotes recruitment of CHD1L. Mono-ADP-ribosylated on Glu-3 (H2BE2ADPr) by PARP3 in response to single-strand breaks. Poly ADP-ribosylation on Glu-36 (H2BE35ADPr) by PARP1 regulates adipogenesis: it inhibits phosphorylation at Ser-37 (H2BS36ph), thereby blocking expression of pro-adipogenetic genes. Post-translationally, crotonylation (Kcr) is specifically present in male germ cells and marks testis-specific genes in post-meiotic cells, including X-linked genes that escape sex chromosome inactivation in haploid cells. Crotonylation marks active promoters and enhancers and confers resistance to transcriptional repressors. It is also associated with post-meiotically activated genes on autosomes. GlcNAcylation at Ser-113 promotes monoubiquitination of Lys-121. It fluctuates in response to extracellular glucose, and associates with transcribed genes. In terms of processing, lactylated in macrophages by EP300/P300 by using lactoyl-CoA directly derived from endogenous or exogenous lactate, leading to stimulates gene transcription.

It localises to the nucleus. It is found in the chromosome. Its function is as follows. Core component of nucleosome. Nucleosomes wrap and compact DNA into chromatin, limiting DNA accessibility to the cellular machineries which require DNA as a template. Histones thereby play a central role in transcription regulation, DNA repair, DNA replication and chromosomal stability. DNA accessibility is regulated via a complex set of post-translational modifications of histones, also called histone code, and nucleosome remodeling. In terms of biological role, has broad antibacterial activity. May contribute to the formation of the functional antimicrobial barrier of the colonic epithelium, and to the bactericidal activity of amniotic fluid. This Pongo abelii (Sumatran orangutan) protein is Histone H2B type 2-E.